Reading from the N-terminus, the 29-residue chain is Toxin Bl-4 (29 aa).

The protein belongs to the long (4 C-C) scorpion toxin superfamily. Sodium channel inhibitor family. Beta subfamily. Expressed by the venom gland.

It localises to the secreted. In terms of biological role, excitatory insect beta-toxins induce a spastic paralysis. They bind voltage-independently at site-4 of sodium channels (Nav) and shift the voltage of activation toward more negative potentials thereby affecting sodium channel activation and promoting spontaneous and repetitive firing. The fraction to which this protein belongs exhibits low toxicity and induces transient paralysis in all insects tested (the crickets A.domesticus). The protein is Toxin Bl-4 of Buthacus leptochelys (Egyptian fat-tailed scorpion).